Consider the following 427-residue polypeptide: Inward rectifier potassium channel 2 (427 aa).

At 1–81 the chain is on the cytoplasmic side; the sequence is MGSVRTNRYS…IFTTCVDIRW (81 aa). Cys76 bears the S-nitrosocysteine mark. The chain crosses the membrane as a helical span at residues 82-106; it reads RWMLVIFCLAFVLSWLFFGCVFWLI. The Extracellular portion of the chain corresponds to 107–128; sequence ALLHGDLDASKESKACVSEVNS. The helical; Pore-forming intramembrane region spans 129–140; sequence FTAAFLFSIETQ. Positions 141 to 147 form an intramembrane region, pore-forming; that stretch reads TTIGYGF. A Selectivity filter motif is present at residues 142-147; the sequence is TIGYGF. Topologically, residues 148–156 are extracellular; that stretch reads RCVTDECPI. Residues 157–178 traverse the membrane as a helical segment; that stretch reads AVFMVVFQSIVGCIIDAFIIGA. Residues 179–427 are Cytoplasmic-facing; it reads VMAKMAKPKK…PRPLRRESEI (249 aa). A polyphosphoinositide (PIP2)-binding region spans residues 181–208; sequence AKMAKPKKRNETLVFSHNAVIAMRDGKL. The disordered stretch occupies residues 384–427; sequence SKEEDDSENGVPESTSTDTPPDIDLHNQASVPLEPRPLRRESEI. The PDZ-binding signature appears at 425–427; the sequence is SEI.

The protein belongs to the inward rectifier-type potassium channel (TC 1.A.2.1) family. KCNJ2 subfamily. As to quaternary structure, homotetramer. Homomultimeric and heteromultimeric association with KCNJ4/Kir2.3. Can form heteromeric channels with Kir2.6/KCNJ18. Associates, via its PDZ-recognition domain, with a complex containing LIN7A, LIN7B, LIN7C, DLG1, CASK and APBA1. Post-translationally, S-nitrosylation increases the open probability and inward rectifying currents.

The protein localises to the cell membrane. It is found in the sarcolemma. Its subcellular location is the T-tubule. It catalyses the reaction K(+)(in) = K(+)(out). Its activity is regulated as follows. Activated by phosphatidylinositol 4,5 biphosphate (PtdIns(4,5)P2). Functionally, inward rectifier potassium channels are characterized by a greater tendency to allow potassium to flow into the cell rather than out of it. Their voltage dependence is regulated by the concentration of extracellular potassium; as external potassium is raised, the voltage range of the channel opening shifts to more positive voltages. The inward rectification is mainly due to the blockage of outward current by internal magnesium. Blocked by external barium or cesium. Probably participates in establishing action potential waveform and excitability of neuronal and muscle tissues. This Cavia porcellus (Guinea pig) protein is Inward rectifier potassium channel 2 (KCNJ2).